Reading from the N-terminus, the 262-residue chain is Cell division protein FtsQ (262 aa).

Topologically, residues 1–20 are cytoplasmic; that stretch reads MSWSDKRRHWRARKSQVNWY. The chain crosses the membrane as a helical span at residues 21–41; it reads LWSGIGFLSLVIGSFVFGGYL. Topologically, residues 42–262 are periplasmic; sequence LHKFLNDAST…EPIINDEKPR (221 aa). Residues 52 to 121 form the POTRA domain; the sequence is LPIEAVAIKG…AKLRVYLQEQ (70 aa).

The protein belongs to the FtsQ/DivIB family. FtsQ subfamily. As to quaternary structure, part of a complex composed of FtsB, FtsL and FtsQ.

The protein localises to the cell inner membrane. Functionally, essential cell division protein. May link together the upstream cell division proteins, which are predominantly cytoplasmic, with the downstream cell division proteins, which are predominantly periplasmic. May control correct divisome assembly. This is Cell division protein FtsQ from Shewanella oneidensis (strain ATCC 700550 / JCM 31522 / CIP 106686 / LMG 19005 / NCIMB 14063 / MR-1).